The sequence spans 182 residues: Adenine phosphoribosyltransferase (182 aa).

It belongs to the purine/pyrimidine phosphoribosyltransferase family. In terms of assembly, homodimer.

It is found in the cytoplasm. It catalyses the reaction AMP + diphosphate = 5-phospho-alpha-D-ribose 1-diphosphate + adenine. Its pathway is purine metabolism; AMP biosynthesis via salvage pathway; AMP from adenine: step 1/1. In terms of biological role, catalyzes a salvage reaction resulting in the formation of AMP, that is energically less costly than de novo synthesis. In Streptomyces galbus, this protein is Adenine phosphoribosyltransferase.